A 420-amino-acid chain; its full sequence is Tyrosine--tRNA ligase (420 aa).

Tyr-39 contacts L-tyrosine. A 'HIGH' region motif is present at residues 44-53 (CTAPSLHIGS). L-tyrosine is bound by residues Tyr-176 and Gln-180. Residues 236 to 240 (KMGKT) carry the 'KMSKS' region motif. Lys-239 serves as a coordination point for ATP. The S4 RNA-binding domain maps to 349–414 (IPLIDLLYDT…AGKKRHIKIL (66 aa)).

Belongs to the class-I aminoacyl-tRNA synthetase family. TyrS type 1 subfamily. Homodimer.

It is found in the cytoplasm. It carries out the reaction tRNA(Tyr) + L-tyrosine + ATP = L-tyrosyl-tRNA(Tyr) + AMP + diphosphate + H(+). Its function is as follows. Catalyzes the attachment of tyrosine to tRNA(Tyr) in a two-step reaction: tyrosine is first activated by ATP to form Tyr-AMP and then transferred to the acceptor end of tRNA(Tyr). In Wolbachia pipientis subsp. Culex pipiens (strain wPip), this protein is Tyrosine--tRNA ligase.